Here is a 482-residue protein sequence, read N- to C-terminus: tRNA sulfurtransferase (482 aa).

A THUMP domain is found at 61-165 (LAIRDALTRI…DDRLLLIKGR (105 aa)). Residues 183–184 (LI), Lys265, Gly287, and Gln296 contribute to the ATP site. An intrachain disulfide couples Cys344 to Cys456. The Rhodanese domain maps to 404–482 (FGPNDVILDI…GFNNVKVYRP (79 aa)). Residue Cys456 is the Cysteine persulfide intermediate of the active site.

The protein belongs to the ThiI family.

Its subcellular location is the cytoplasm. The catalysed reaction is [ThiI sulfur-carrier protein]-S-sulfanyl-L-cysteine + a uridine in tRNA + 2 reduced [2Fe-2S]-[ferredoxin] + ATP + H(+) = [ThiI sulfur-carrier protein]-L-cysteine + a 4-thiouridine in tRNA + 2 oxidized [2Fe-2S]-[ferredoxin] + AMP + diphosphate. The enzyme catalyses [ThiS sulfur-carrier protein]-C-terminal Gly-Gly-AMP + S-sulfanyl-L-cysteinyl-[cysteine desulfurase] + AH2 = [ThiS sulfur-carrier protein]-C-terminal-Gly-aminoethanethioate + L-cysteinyl-[cysteine desulfurase] + A + AMP + 2 H(+). It functions in the pathway cofactor biosynthesis; thiamine diphosphate biosynthesis. Catalyzes the ATP-dependent transfer of a sulfur to tRNA to produce 4-thiouridine in position 8 of tRNAs, which functions as a near-UV photosensor. Also catalyzes the transfer of sulfur to the sulfur carrier protein ThiS, forming ThiS-thiocarboxylate. This is a step in the synthesis of thiazole, in the thiamine biosynthesis pathway. The sulfur is donated as persulfide by IscS. This Escherichia coli O45:K1 (strain S88 / ExPEC) protein is tRNA sulfurtransferase.